A 507-amino-acid polypeptide reads, in one-letter code: ATP synthase subunit alpha, chloroplastic (507 aa).

170–177 (GDRQTGKA) is a binding site for ATP.

Belongs to the ATPase alpha/beta chains family. F-type ATPases have 2 components, CF(1) - the catalytic core - and CF(0) - the membrane proton channel. CF(1) has five subunits: alpha(3), beta(3), gamma(1), delta(1), epsilon(1). CF(0) has four main subunits: a, b, b' and c.

It is found in the plastid. Its subcellular location is the chloroplast thylakoid membrane. The catalysed reaction is ATP + H2O + 4 H(+)(in) = ADP + phosphate + 5 H(+)(out). Its function is as follows. Produces ATP from ADP in the presence of a proton gradient across the membrane. The alpha chain is a regulatory subunit. The sequence is that of ATP synthase subunit alpha, chloroplastic from Calycanthus floridus var. glaucus (Eastern sweetshrub).